The chain runs to 194 residues: Isopentenyl-diphosphate Delta-isomerase (194 aa).

The Mn(2+) site is built by histidine 27 and histidine 34. Residues alanine 32–leucine 166 form the Nudix hydrolase domain. Cysteine 69 is an active-site residue. Histidine 71 is a Mn(2+) binding site. Glutamate 89 is a Mg(2+) binding site. Glutamate 116 and glutamate 118 together coordinate Mn(2+). Glutamate 118 is a catalytic residue.

The protein belongs to the IPP isomerase type 1 family. Mg(2+) serves as cofactor. Mn(2+) is required as a cofactor.

Its subcellular location is the cytoplasm. The enzyme catalyses isopentenyl diphosphate = dimethylallyl diphosphate. It participates in isoprenoid biosynthesis; dimethylallyl diphosphate biosynthesis; dimethylallyl diphosphate from isopentenyl diphosphate: step 1/1. Functionally, catalyzes the 1,3-allylic rearrangement of the homoallylic substrate isopentenyl (IPP) to its highly electrophilic allylic isomer, dimethylallyl diphosphate (DMAPP). The protein is Isopentenyl-diphosphate Delta-isomerase of Clavibacter michiganensis subsp. michiganensis (strain NCPPB 382).